A 346-amino-acid chain; its full sequence is Ketol-acid reductoisomerase (NADP(+)) (346 aa).

A KARI N-terminal Rossmann domain is found at 1-189 (MQVYYDRDAD…GGGRSGIIET (189 aa)). NADP(+) contacts are provided by residues 24 to 27 (YGSQ), Arg-48, Ser-51, Thr-53, and 83 to 86 (DEHQ). The active site involves His-108. Gly-134 provides a ligand contact to NADP(+). In terms of domain architecture, KARI C-terminal knotted spans 190-335 (TFKEECETDL…EKLRAMMPWI (146 aa)). Asp-198, Glu-202, Glu-234, and Glu-238 together coordinate Mg(2+). A substrate-binding site is contributed by Ser-259.

Belongs to the ketol-acid reductoisomerase family. The cofactor is Mg(2+).

It catalyses the reaction (2R)-2,3-dihydroxy-3-methylbutanoate + NADP(+) = (2S)-2-acetolactate + NADPH + H(+). The enzyme catalyses (2R,3R)-2,3-dihydroxy-3-methylpentanoate + NADP(+) = (S)-2-ethyl-2-hydroxy-3-oxobutanoate + NADPH + H(+). It functions in the pathway amino-acid biosynthesis; L-isoleucine biosynthesis; L-isoleucine from 2-oxobutanoate: step 2/4. The protein operates within amino-acid biosynthesis; L-valine biosynthesis; L-valine from pyruvate: step 2/4. Its function is as follows. Involved in the biosynthesis of branched-chain amino acids (BCAA). Catalyzes an alkyl-migration followed by a ketol-acid reduction of (S)-2-acetolactate (S2AL) to yield (R)-2,3-dihydroxy-isovalerate. In the isomerase reaction, S2AL is rearranged via a Mg-dependent methyl migration to produce 3-hydroxy-3-methyl-2-ketobutyrate (HMKB). In the reductase reaction, this 2-ketoacid undergoes a metal-dependent reduction by NADPH to yield (R)-2,3-dihydroxy-isovalerate. This is Ketol-acid reductoisomerase (NADP(+)) from Sphingopyxis alaskensis (strain DSM 13593 / LMG 18877 / RB2256) (Sphingomonas alaskensis).